Reading from the N-terminus, the 380-residue chain is Cytochrome b (380 aa).

Helical transmembrane passes span 34–54, 78–99, 114–134, and 179–199; these read FGSL…LLAM, WLIR…YLHI, WNTG…GYVL, and FFAL…IHLT. Heme b contacts are provided by His84 and His98. Residues His183 and His197 each contribute to the heme b site. His202 lines the a ubiquinone pocket. The next 4 membrane-spanning stretches (helical) occupy residues 227-247, 289-309, 321-341, and 348-368; these read LKDI…ALFS, LGGV…PFLH, LSQL…WVGS, and FIII…ILFP.

It belongs to the cytochrome b family. In terms of assembly, the cytochrome bc1 complex contains 11 subunits: 3 respiratory subunits (MT-CYB, CYC1 and UQCRFS1), 2 core proteins (UQCRC1 and UQCRC2) and 6 low-molecular weight proteins (UQCRH/QCR6, UQCRB/QCR7, UQCRQ/QCR8, UQCR10/QCR9, UQCR11/QCR10 and a cleavage product of UQCRFS1). This cytochrome bc1 complex then forms a dimer. Heme b is required as a cofactor.

The protein resides in the mitochondrion inner membrane. Its function is as follows. Component of the ubiquinol-cytochrome c reductase complex (complex III or cytochrome b-c1 complex) that is part of the mitochondrial respiratory chain. The b-c1 complex mediates electron transfer from ubiquinol to cytochrome c. Contributes to the generation of a proton gradient across the mitochondrial membrane that is then used for ATP synthesis. In Calonectris leucomelas (Streaked shearwater), this protein is Cytochrome b (MT-CYB).